A 968-amino-acid polypeptide reads, in one-letter code: Glycine dehydrogenase (decarboxylating) (968 aa).

Lys713 bears the N6-(pyridoxal phosphate)lysine mark.

It belongs to the GcvP family. In terms of assembly, the glycine cleavage system is composed of four proteins: P, T, L and H. Pyridoxal 5'-phosphate is required as a cofactor.

It carries out the reaction N(6)-[(R)-lipoyl]-L-lysyl-[glycine-cleavage complex H protein] + glycine + H(+) = N(6)-[(R)-S(8)-aminomethyldihydrolipoyl]-L-lysyl-[glycine-cleavage complex H protein] + CO2. In terms of biological role, the glycine cleavage system catalyzes the degradation of glycine. The P protein binds the alpha-amino group of glycine through its pyridoxal phosphate cofactor; CO(2) is released and the remaining methylamine moiety is then transferred to the lipoamide cofactor of the H protein. The protein is Glycine dehydrogenase (decarboxylating) of Variovorax paradoxus (strain S110).